A 121-amino-acid chain; its full sequence is Non-structural protein 8 (121 aa).

The N-terminal stretch at M1–C15 is a signal peptide. One can recognise an SARS ORF8 Ig-like domain in the interval E19–I121. Disulfide bonds link C25–C90, C37–C102, and C61–C83.

In Bat coronavirus HKU3 (BtCoV), this protein is Non-structural protein 8.